The chain runs to 332 residues: Glycerol-3-phosphate dehydrogenase [NAD(P)+] (332 aa).

NADPH-binding residues include Ser-11, Trp-12, Arg-32, Arg-33, and Lys-106. Sn-glycerol 3-phosphate contacts are provided by Lys-106 and Gly-136. Position 140 (Ala-140) interacts with NADPH. 5 residues coordinate sn-glycerol 3-phosphate: Lys-191, Asp-244, Ser-254, Arg-255, and Asn-256. Lys-191 acts as the Proton acceptor in catalysis. Position 255 (Arg-255) interacts with NADPH. NADPH-binding residues include Val-280 and Glu-282.

Belongs to the NAD-dependent glycerol-3-phosphate dehydrogenase family.

It localises to the cytoplasm. It catalyses the reaction sn-glycerol 3-phosphate + NAD(+) = dihydroxyacetone phosphate + NADH + H(+). The enzyme catalyses sn-glycerol 3-phosphate + NADP(+) = dihydroxyacetone phosphate + NADPH + H(+). The protein operates within membrane lipid metabolism; glycerophospholipid metabolism. Catalyzes the reduction of the glycolytic intermediate dihydroxyacetone phosphate (DHAP) to sn-glycerol 3-phosphate (G3P), the key precursor for phospholipid synthesis. The protein is Glycerol-3-phosphate dehydrogenase [NAD(P)+] of Corynebacterium kroppenstedtii (strain DSM 44385 / JCM 11950 / CIP 105744 / CCUG 35717).